A 112-amino-acid chain; its full sequence is Protein lin-52 homolog (112 aa).

This sequence belongs to the lin-52 family. Component of the DREAM complex.

This is Protein lin-52 homolog (LIN52) from Gallus gallus (Chicken).